Consider the following 316-residue polypeptide: GTP cyclohydrolase FolE2 2 (316 aa).

Belongs to the GTP cyclohydrolase IV family.

The enzyme catalyses GTP + H2O = 7,8-dihydroneopterin 3'-triphosphate + formate + H(+). It participates in cofactor biosynthesis; 7,8-dihydroneopterin triphosphate biosynthesis; 7,8-dihydroneopterin triphosphate from GTP: step 1/1. Converts GTP to 7,8-dihydroneopterin triphosphate. This chain is GTP cyclohydrolase FolE2 2, found in Burkholderia orbicola (strain MC0-3).